The sequence spans 59 residues: MNQGRIWTVVKPTVGLPLLLGSVTVIAILVHFAVLSNTTWFSKYWNGKAAAIESSVSIG.

The Cytoplasmic segment spans residues 1–11; that stretch reads MNQGRIWTVVK. Residues 12-35 traverse the membrane as a helical segment; that stretch reads PTVGLPLLLGSVTVIAILVHFAVL. His31 is an a bacteriochlorophyll binding site. Residues 36-59 lie on the Periplasmic side of the membrane; that stretch reads SNTTWFSKYWNGKAAAIESSVSIG.

Belongs to the antenna complex alpha subunit family. The core complex is formed by different alpha and beta chains, binding bacteriochlorophyll molecules, and arranged most probably in tetrameric structures disposed around the reaction center. The non-pigmented gamma chains may constitute additional components.

It localises to the cell inner membrane. Its function is as follows. Antenna complexes are light-harvesting systems, which transfer the excitation energy to the reaction centers. This chain is Light-harvesting protein B-800-850 alpha chain E (pucAE), found in Rhodopseudomonas palustris (strain ATCC BAA-98 / CGA009).